The following is a 74-amino-acid chain: Acyl carrier protein (74 aa).

Residues 1 to 73 (MAVFEKVQEI…DLVAYVEEKT (73 aa)) form the Carrier domain. At S35 the chain carries O-(pantetheine 4'-phosphoryl)serine.

This sequence belongs to the acyl carrier protein (ACP) family. Post-translationally, 4'-phosphopantetheine is transferred from CoA to a specific serine of apo-ACP by AcpS. This modification is essential for activity because fatty acids are bound in thioester linkage to the sulfhydryl of the prosthetic group.

It is found in the cytoplasm. Its pathway is lipid metabolism; fatty acid biosynthesis. In terms of biological role, carrier of the growing fatty acid chain in fatty acid biosynthesis. This Streptococcus thermophilus (strain CNRZ 1066) protein is Acyl carrier protein.